Here is a 202-residue protein sequence, read N- to C-terminus: ATP-dependent dethiobiotin synthetase BioD (202 aa).

12–17 is a binding site for ATP; sequence GIGKTI. Thr-16 provides a ligand contact to Mg(2+). Lys-32 is a catalytic residue. Ser-36 lines the substrate pocket. Residues Asp-43, 94-97, and 178-180 contribute to the ATP site; these read EGAG and PVV. 2 residues coordinate Mg(2+): Asp-43 and Glu-94.

Belongs to the dethiobiotin synthetase family. As to quaternary structure, homodimer. The cofactor is Mg(2+).

It localises to the cytoplasm. The catalysed reaction is (7R,8S)-7,8-diammoniononanoate + CO2 + ATP = (4R,5S)-dethiobiotin + ADP + phosphate + 3 H(+). Its pathway is cofactor biosynthesis; biotin biosynthesis; biotin from 7,8-diaminononanoate: step 1/2. In terms of biological role, catalyzes a mechanistically unusual reaction, the ATP-dependent insertion of CO2 between the N7 and N8 nitrogen atoms of 7,8-diaminopelargonic acid (DAPA, also called 7,8-diammoniononanoate) to form a ureido ring. The chain is ATP-dependent dethiobiotin synthetase BioD from Sphingopyxis alaskensis (strain DSM 13593 / LMG 18877 / RB2256) (Sphingomonas alaskensis).